We begin with the raw amino-acid sequence, 180 residues long: Inner membrane-spanning protein YciB (180 aa).

A run of 6 helical transmembrane segments spans residues 4–24 (FLSEIGPVIAFFAGFFYGGGI), 25–45 (QHATLYMLITSVICITLCYVI), 49–69 (VSKLSIISTTVLLVSGSITLI), 76–96 (IKIKPTILYVIFGIIFLMSGI), 118–138 (ITLSYRTAAFFFFMAVVNEVV), and 150–170 (FKVFGVIPITFIFILLQLPLL).

It belongs to the YciB family.

It localises to the cell inner membrane. In terms of biological role, plays a role in cell envelope biogenesis, maintenance of cell envelope integrity and membrane homeostasis. The sequence is that of Inner membrane-spanning protein YciB from Rickettsia rickettsii (strain Iowa).